We begin with the raw amino-acid sequence, 438 residues long: UDP-N-acetylglucosamine 1-carboxyvinyltransferase 1 (438 aa).

Position 22-23 (Lys22–Asn23) interacts with phosphoenolpyruvate. Arg95 contacts UDP-N-acetyl-alpha-D-glucosamine. Cys119 (proton donor) is an active-site residue. At Cys119 the chain carries 2-(S-cysteinyl)pyruvic acid O-phosphothioketal. UDP-N-acetyl-alpha-D-glucosamine-binding positions include Arg124–Leu128, Asp307, and Val329.

Belongs to the EPSP synthase family. MurA subfamily.

The protein localises to the cytoplasm. It carries out the reaction phosphoenolpyruvate + UDP-N-acetyl-alpha-D-glucosamine = UDP-N-acetyl-3-O-(1-carboxyvinyl)-alpha-D-glucosamine + phosphate. It participates in cell wall biogenesis; peptidoglycan biosynthesis. Its function is as follows. Cell wall formation. Adds enolpyruvyl to UDP-N-acetylglucosamine. This Lactiplantibacillus plantarum (strain ATCC BAA-793 / NCIMB 8826 / WCFS1) (Lactobacillus plantarum) protein is UDP-N-acetylglucosamine 1-carboxyvinyltransferase 1.